The chain runs to 438 residues: MADYQGKNVVIIGLGLTGLSCVDFFLARGVTPRVMDTRMTPPGLDKLPEAVERHTGSLNDEWLMAADLIVASPGIAQAHPSLSAAADAGIEIVGDIELFCREAQAPIVAITGSNGKSTVTTLVGEMAKAAGVNVGVGGNIGLPALMLLDAECELYVLELSSFQLETTSSLQAVAATILNVTEDHMDRYPFGLQQYRAAKLRIYENAKVCVVNADDALTMPIRGADERCVSFGVNMGDYHLNHQQGETWLRVKGEKVLNVKEMKLSGQHNYTNALAALALADAAGLPRASSLKALTTFTGLPHRFEVVLEHNGVRWINDSKATNVGSTEAALNGLQVDGTLHLLLGGDGKSADFSPLARYLNGDNVRLYCFGRDGAQLAALRPEVAEQTETMEQAMRLLAPRVQLGDMVLLSPACASLDQFKNFEQRGNEFARLAKELG.

Residue 112 to 118 participates in ATP binding; it reads GSNGKST.

It belongs to the MurCDEF family.

It localises to the cytoplasm. The enzyme catalyses UDP-N-acetyl-alpha-D-muramoyl-L-alanine + D-glutamate + ATP = UDP-N-acetyl-alpha-D-muramoyl-L-alanyl-D-glutamate + ADP + phosphate + H(+). It participates in cell wall biogenesis; peptidoglycan biosynthesis. Its function is as follows. Cell wall formation. Catalyzes the addition of glutamate to the nucleotide precursor UDP-N-acetylmuramoyl-L-alanine (UMA). This is UDP-N-acetylmuramoylalanine--D-glutamate ligase from Shigella sonnei (strain Ss046).